The primary structure comprises 618 residues: DNA mismatch repair protein MutL (618 aa).

Residues 367–402 form a disordered region; that stretch reads EPTTAREPATPRYSGGASGGNGGRQTAGGWPHAQPG. Residues 382 to 392 are compositionally biased toward gly residues; it reads GASGGNGGRQT.

Belongs to the DNA mismatch repair MutL/HexB family.

In terms of biological role, this protein is involved in the repair of mismatches in DNA. It is required for dam-dependent methyl-directed DNA mismatch repair. May act as a 'molecular matchmaker', a protein that promotes the formation of a stable complex between two or more DNA-binding proteins in an ATP-dependent manner without itself being part of a final effector complex. This is DNA mismatch repair protein MutL from Salmonella paratyphi A (strain ATCC 9150 / SARB42).